We begin with the raw amino-acid sequence, 62 residues long: Photosystem II reaction center protein Z (62 aa).

Helical transmembrane passes span 8-28 (ALAALVALSFLMVIGVPVAYA) and 41-61 (FVGSIAWTVLVIAVGVLNFFV).

The protein belongs to the PsbZ family. As to quaternary structure, PSII is composed of 1 copy each of membrane proteins PsbA, PsbB, PsbC, PsbD, PsbE, PsbF, PsbH, PsbI, PsbJ, PsbK, PsbL, PsbM, PsbT, PsbX, PsbY, PsbZ, Psb30/Ycf12, peripheral proteins PsbO, CyanoQ (PsbQ), PsbU, PsbV and a large number of cofactors. It forms dimeric complexes.

The protein localises to the cellular thylakoid membrane. In terms of biological role, may control the interaction of photosystem II (PSII) cores with the light-harvesting antenna, regulates electron flow through the 2 photosystem reaction centers. PSII is a light-driven water plastoquinone oxidoreductase, using light energy to abstract electrons from H(2)O, generating a proton gradient subsequently used for ATP formation. This is Photosystem II reaction center protein Z from Picosynechococcus sp. (strain ATCC 27264 / PCC 7002 / PR-6) (Agmenellum quadruplicatum).